The chain runs to 227 residues: Ferritin light chain (227 aa).

The first 19 residues, 1–19 (MKFFVALALFACLGSLALA), serve as a signal peptide directing secretion. A disulfide bridge connects residues Cys25 and Cys44. A Ferritin-like diiron domain is found at 48–208 (FAGIDHIEPE…GYANDLAKLM (161 aa)).

This sequence belongs to the ferritin family. Oligomer of 12 light (L) chains and 12 heavy (H) chains; L and H chains are disulfide-linked. The functional molecule forms a roughly spherical shell with a diameter of 12 nm and contains a central cavity into which the insoluble ferric iron core is deposited. In terms of tissue distribution, expressed in hemolymph, gut, ovaries and to a lesser extent in testes (at protein level). Expressed in the head (at protein level).

Its subcellular location is the golgi apparatus. The protein localises to the secreted. Its function is as follows. Stores iron in a soluble, non-toxic, readily available form. Important for iron homeostasis. Iron is taken up in the ferrous form and deposited as ferric hydroxides after oxidation. Ferritin is composed of a heavy (H) chain which is responsible for the oxidation and uptake of ferrous iron, and a light (L) chain which facilitates the nucleation of the ferrihydrite iron core. Required for dietary iron absorption in the midgut. Involved in tissue iron detoxification by exporting excess iron. Plays a role in the maintenance of circadian rhythms. Required for embryo and larval development. In Drosophila melanogaster (Fruit fly), this protein is Ferritin light chain.